The sequence spans 289 residues: Esterase GA18864 (289 aa).

Positions 1–19 (MTNNDAAVEAPSSSRASSS) are enriched in low complexity. Residues 1-24 (MTNNDAAVEAPSSSRASSSKQQPK) form a disordered region. Catalysis depends on charge relay system residues S133, D191, and H218. Positions 253–289 (VSFIESGAEDNDDDGDANDAEVAAATAAAGSDLDDSD) are disordered. Acidic residues predominate over residues 259 to 271 (GAEDNDDDGDAND). A compositionally biased stretch (low complexity) spans 272–283 (AEVAAATAAAGS).

This sequence belongs to the LovG family.

In Drosophila pseudoobscura pseudoobscura (Fruit fly), this protein is Esterase GA18864.